An 870-amino-acid chain; its full sequence is A-kinase anchor protein 2 (870 aa).

Disordered regions lie at residues 14 to 43 and 103 to 165; these read PGITSTPHSKDHSSPFYSPSHNGLLTDHHE and IEKA…SSRD. S122 bears the Phosphoserine mark. Positions 133–151 are enriched in polar residues; it reads GHSTDQPQDMLGNSLQAPA. S152 is modified (phosphoserine). Residues 152–161 are compositionally biased toward low complexity; that stretch reads SPSSSTSSHC. Residue K174 forms a Glycyl lysine isopeptide (Lys-Gly) (interchain with G-Cter in SUMO1); alternate linkage. A Glycyl lysine isopeptide (Lys-Gly) (interchain with G-Cter in SUMO2); alternate cross-link involves residue K174. Positions 213 to 307 form a coiled coil; the sequence is EEMIELEKER…QQQQLSTSQL (95 aa). Positions 233–324 are disordered; that stretch reads KNPGIAAKWW…EHLDSIEHTK (92 aa). Positions 259–274 are enriched in basic and acidic residues; that stretch reads LESHRKYKERKEKRAQ. Residues 275–302 are compositionally biased toward low complexity; it reads QEQLQLQQQQQQQLQQLQQLQQQQQQQL. Basic and acidic residues predominate over residues 313–324; it reads AHEHLDSIEHTK. S347 is modified (phosphoserine). The segment at 409–436 is disordered; sequence ESQSAGAGTGNAATQGKEGPYSEPSKRG. Residues 410–424 show a composition bias toward low complexity; sequence SQSAGAGTGNAATQG. 3 positions are modified to phosphoserine: S472, S476, and S528. The span at 506–543 shows a compositional bias: polar residues; it reads FSMDNISDSGASNETPNALQENSLADFSLPQTPQTDNP. 2 disordered regions span residues 506–577 and 595–688; these read FSMD…DPLE and QVDK…RPEG. The residue at position 537 (T537) is a Phosphothreonine. Positions 576-589 are PKA-RII subunit binding domain; the sequence is LEYQAGLLVQNAIQ. The span at 595–608 shows a compositional bias: basic and acidic residues; sequence QVDKAEVHTSKEGS. S641 carries the phosphoserine modification. A compositionally biased stretch (basic and acidic residues) spans 644-665; the sequence is QEKRDVLPKILPGEDKTLREKG. A coiled-coil region spans residues 720–755; sequence KLRSRKQRTLSMIEEEIRAAQEREEELKRQRQVRQS. Residues S730, S758, S789, and S796 each carry the phosphoserine modification. Residues 740 to 814 form a disordered region; the sequence is QEREEELKRQ…EAAGAQRPKN (75 aa). The segment covering 755-774 has biased composition (polar residues); sequence STPSPRAQNAPSLPSRTTCY.

It is found in the apical cell membrane. Binds to regulatory subunit (RII) of protein kinase A. May be involved in establishing polarity in signaling systems or in integrating PKA-RII isoforms with downstream effectors to capture, amplify and focus diffuse, trans-cellular signals carried by cAMP. Binds to and modulates the structure of the actin cytoskeleton. The protein is A-kinase anchor protein 2 of Rattus norvegicus (Rat).